A 366-amino-acid chain; its full sequence is Ribosomal RNA large subunit methyltransferase M (366 aa).

S-adenosyl-L-methionine-binding positions include serine 188, 221–224 (CPGG), aspartate 240, aspartate 260, and aspartate 277. Residue lysine 306 is the Proton acceptor of the active site.

The protein belongs to the class I-like SAM-binding methyltransferase superfamily. RNA methyltransferase RlmE family. RlmM subfamily. Monomer.

It is found in the cytoplasm. The enzyme catalyses cytidine(2498) in 23S rRNA + S-adenosyl-L-methionine = 2'-O-methylcytidine(2498) in 23S rRNA + S-adenosyl-L-homocysteine + H(+). Its function is as follows. Catalyzes the 2'-O-methylation at nucleotide C2498 in 23S rRNA. This is Ribosomal RNA large subunit methyltransferase M from Shigella sonnei (strain Ss046).